Reading from the N-terminus, the 405-residue chain is Diaminohydroxyphosphoribosylamino-pyrimidine deaminase (405 aa).

One can recognise a CMP/dCMP-type deaminase domain in the interval 256 to 383 (YNHEEYMLKA…DLLKKAGIVV (128 aa)). His305 provides a ligand contact to Zn(2+). The Proton donor role is filled by Glu307. Residues Cys335 and Cys345 each coordinate Zn(2+).

Belongs to the cytidine and deoxycytidylate deaminase family. It depends on Zn(2+) as a cofactor.

The protein localises to the cytoplasm. The protein resides in the nucleus. The catalysed reaction is 2,5-diamino-6-hydroxy-4-(5-phosphoribosylamino)-pyrimidine + H2O + H(+) = 5-amino-6-(5-phospho-D-ribosylamino)uracil + NH4(+). It functions in the pathway cofactor biosynthesis; riboflavin biosynthesis; 5-amino-6-(D-ribitylamino)uracil from GTP: step 2/4. Involved in riboflavin biosynthesis. Converts 2,5-diamino-6-(ribosylamino)-4(3H)-pyrimidinone 5'-phosphate into 5-amino-6-(ribosylamino)-2,4(1H,3H)-pyrimidinedione 5'-phosphate. In Schizosaccharomyces pombe (strain 972 / ATCC 24843) (Fission yeast), this protein is Diaminohydroxyphosphoribosylamino-pyrimidine deaminase.